Consider the following 125-residue polypeptide: Small ribosomal subunit protein uS12 (125 aa).

Residue Asp89 is modified to 3-methylthioaspartic acid. Positions 105 to 125 (QGVKDRKQSRSKYGAKKPKAK) are disordered. Residues 113–125 (SRSKYGAKKPKAK) show a composition bias toward basic residues.

The protein belongs to the universal ribosomal protein uS12 family. As to quaternary structure, part of the 30S ribosomal subunit. Contacts proteins S8 and S17. May interact with IF1 in the 30S initiation complex.

Its function is as follows. With S4 and S5 plays an important role in translational accuracy. Interacts with and stabilizes bases of the 16S rRNA that are involved in tRNA selection in the A site and with the mRNA backbone. Located at the interface of the 30S and 50S subunits, it traverses the body of the 30S subunit contacting proteins on the other side and probably holding the rRNA structure together. The combined cluster of proteins S8, S12 and S17 appears to hold together the shoulder and platform of the 30S subunit. The chain is Small ribosomal subunit protein uS12 from Delftia acidovorans (strain DSM 14801 / SPH-1).